The chain runs to 457 residues: ATP synthase subunit beta (457 aa).

ATP is bound at residue 147 to 154 (GGAGVGKT).

This sequence belongs to the ATPase alpha/beta chains family. F-type ATPases have 2 components, CF(1) - the catalytic core - and CF(0) - the membrane proton channel. CF(1) has five subunits: alpha(3), beta(3), gamma(1), delta(1), epsilon(1). CF(0) has three main subunits: a(1), b(2) and c(9-12). The alpha and beta chains form an alternating ring which encloses part of the gamma chain. CF(1) is attached to CF(0) by a central stalk formed by the gamma and epsilon chains, while a peripheral stalk is formed by the delta and b chains.

The protein localises to the cell inner membrane. The enzyme catalyses ATP + H2O + 4 H(+)(in) = ADP + phosphate + 5 H(+)(out). In terms of biological role, produces ATP from ADP in the presence of a proton gradient across the membrane. The catalytic sites are hosted primarily by the beta subunits. The sequence is that of ATP synthase subunit beta from Haemophilus influenzae (strain PittGG).